Reading from the N-terminus, the 247-residue chain is ATP synthase subunit a, chloroplastic (247 aa).

5 helical membrane-spanning segments follow: residues 38–58 (QVLITSWVVIAILLGSASIAV), 95–115 (VPFIGTMFLFIFVSNWSGALL), 134–154 (INTTVALALLTSVAYFYAGLT), 199–219 (LVVVVLVSLVPLVVPIPVMFL), and 220–240 (GLFTSGIQALIFATLAAAYIG).

Belongs to the ATPase A chain family. In terms of assembly, F-type ATPases have 2 components, CF(1) - the catalytic core - and CF(0) - the membrane proton channel. CF(1) has five subunits: alpha(3), beta(3), gamma(1), delta(1), epsilon(1). CF(0) has four main subunits: a, b, b' and c.

It is found in the plastid. Its subcellular location is the chloroplast thylakoid membrane. Key component of the proton channel; it plays a direct role in the translocation of protons across the membrane. This chain is ATP synthase subunit a, chloroplastic, found in Eucalyptus globulus subsp. globulus (Tasmanian blue gum).